Here is a 464-residue protein sequence, read N- to C-terminus: Ribulose bisphosphate carboxylase/oxygenase activase A, chloroplastic (464 aa).

The transit peptide at 1–48 (MAAAFSSTVGAPASTPTNFLGKKLKKQVTSAVNYHGKSSKANRFTVMA) directs the protein to the chloroplast. 155-162 (GGKGQGKS) is a binding site for ATP.

It belongs to the RuBisCO activase family.

The protein resides in the plastid. It is found in the chloroplast stroma. Activation of RuBisCO (ribulose-1,5-bisphosphate carboxylase/oxygenase; EC 4.1.1.39) involves the ATP-dependent carboxylation of the epsilon-amino group of lysine leading to a carbamate structure. This Hordeum vulgare (Barley) protein is Ribulose bisphosphate carboxylase/oxygenase activase A, chloroplastic (RCAA).